Here is a 229-residue protein sequence, read N- to C-terminus: Uracil-DNA glycosylase (229 aa).

Asp70 functions as the Proton acceptor in the catalytic mechanism.

The protein belongs to the uracil-DNA glycosylase (UDG) superfamily. UNG family.

It localises to the cytoplasm. The enzyme catalyses Hydrolyzes single-stranded DNA or mismatched double-stranded DNA and polynucleotides, releasing free uracil.. Excises uracil residues from the DNA which can arise as a result of misincorporation of dUMP residues by DNA polymerase or due to deamination of cytosine. This chain is Uracil-DNA glycosylase, found in Chlamydia felis (strain Fe/C-56) (Chlamydophila felis).